Consider the following 340-residue polypeptide: Fructoselysine 6-phosphate deglycase (340 aa).

SIS domains follow at residues 35–169 (IVEE…RLAP) and 201–331 (LGEL…PDER).

As to quaternary structure, homododecamer.

The catalysed reaction is N(6)-(6-phospho-D-fructosyl)-L-lysine + H2O = D-glucose 6-phosphate + L-lysine. The protein operates within carbohydrate metabolism; fructoselysine degradation; D-glucose 6-phosphate and lysine from fructoselysine: step 2/2. Catalyzes the reversible conversion of fructoselysine 6-phosphate to glucose 6-phosphate and lysine. Functions in a fructoselysine degradation pathway that allows E.coli to grow on fructoselysine or psicoselysine. The chain is Fructoselysine 6-phosphate deglycase (frlB) from Escherichia coli O157:H7.